The sequence spans 656 residues: RNA-binding protein EWS (656 aa).

An EAD (Gln/Pro/Thr-rich) region spans residues 1–285; the sequence is MASTDYSTYS…GVYGQESGGF (285 aa). 31 tandem repeats follow at residues 8–16, 17–27, 28–34, 35–42, 43–50, 51–59, 60–68, 69–75, 76–84, 85–91, 92–110, 111–116, 117–125, 126–156, 157–163, 164–170, 171–177, 178–188, 189–193, 194–201, 202–206, 207–212, 213–218, 219–224, 225–230, 231–238, 239–245, 246–252, 253–259, 260–276, and 277–285. The interval 8–285 is 31 X approximate tandem repeats; that stretch reads TYSQAAAQQG…GVYGQESGGF (278 aa). A compositionally biased stretch (low complexity) spans 123-137; the sequence is AYPAYGQQPAATAPT. A disordered region spans residues 123–360; it reads AYPAYGQQPA…PVDPDEDSDN (238 aa). Residues 143–172 are compositionally biased toward polar residues; sequence NKPTETSQPQSSTGGYNQPSLGYGQSNYSY. A compositionally biased stretch (low complexity) spans 192-266; sequence PTSYSSTQPT…QSSSYGQQSS (75 aa). The IQ domain maps to 256–285; it reads QQSSSYGQQSSFRQDHPSSMGVYGQESGGF. At S266 the chain carries Phosphoserine; by PKC. R300, R302, R304, R309, R314, R317, and R321 each carry asymmetric dimethylarginine. Residues 308–335 show a composition bias toward gly residues; sequence DRGGMSRGGRGGGRGGMGSAGERGGFNK. Residues 336 to 350 are compositionally biased toward low complexity; that stretch reads PGGPMDEGPDLDLGP. The RRM domain maps to 361-447; sequence SAIYVQGLND…SKLKVSLARK (87 aa). Position 439 is an N6-acetyllysine (K439). Disordered regions lie at residues 448–525 and 547–656; these read KPPM…WQCP and KPEG…DRPY. Residues R455 and R464 each carry the asymmetric dimethylarginine modification. R471 bears the Asymmetric dimethylarginine; alternate mark. R471 bears the Omega-N-methylarginine; alternate mark. Gly residues predominate over residues 472 to 490; that stretch reads GGPGGPGGPGGPMGRMGGR. R486 carries the omega-N-methylarginine modification. R490 is subject to Asymmetric dimethylarginine; by PRMT8. Residues R494, R500, and R503 each carry the asymmetric dimethylarginine modification. An Asymmetric dimethylarginine; alternate modification is found at R506. R506 bears the Omega-N-methylarginine; alternate mark. A RanBP2-type zinc finger spans residues 518 to 549; that stretch reads RAGDWQCPNPGCGNQNFAWRTECNQCKAPKPE. A compositionally biased stretch (pro residues) spans 551–560; it reads FLPPPFPPPG. R563 and R565 each carry asymmetric dimethylarginine. Gly residues predominate over residues 566–591; that stretch reads GGPGGMRGGRGGLMDRGGPGGMFRGG. At R572 the chain carries Asymmetric dimethylarginine; alternate; by PRMT8. R572 carries the omega-N-methylarginine; alternate; by PRMT8 modification. Asymmetric dimethylarginine occurs at positions 575, 581, 589, and 592. A compositionally biased stretch (basic and acidic residues) spans 592–606; sequence RGGDRGGFRGGRGMD. R596 is subject to Asymmetric dimethylarginine; alternate; by PRMT8. R596 is modified (omega-N-methylarginine; alternate; by PRMT8). R600 is modified (asymmetric dimethylarginine). Position 603 is an asymmetric dimethylarginine; by PRMT8 (R603). At R607 the chain carries Asymmetric dimethylarginine; alternate; by PRMT8. Residue R607 is modified to Omega-N-methylarginine; alternate; by PRMT8. The span at 607 to 618 shows a compositional bias: gly residues; that stretch reads RGGFGGGRRGGP. Asymmetric dimethylarginine; alternate is present on R615. R615 carries the omega-N-methylarginine; alternate modification. Asymmetric dimethylarginine is present on residues R633 and R636. The Nuclear localization signal signature appears at 639-656; the sequence is PGKMDKGEHRQERRDRPY. The span at 641–656 shows a compositional bias: basic and acidic residues; it reads KMDKGEHRQERRDRPY.

The protein belongs to the RRM TET family. As to quaternary structure, binds POLR2C, SF1, calmodulin and RNA. Interacts with PTK2B/FAK2 and TDRD3. Binds calmodulin in the presence, but not in the absence, of calcium ion. Forms a complex with REC8, PRDM9, SYCP3 and SYCP1; complex formation is dependent of phosphorylated form of REC8 and requires PRDM9 bound to hotspot DNA; EWSR1 joins PRDM9 with the chromosomal axis through REC8. Phosphorylated; calmodulin-binding inhibits phosphorylation of Ser-266. In terms of processing, highly methylated on arginine residues. Methylation is mediated by PRMT1 and, at lower level by PRMT8. As to expression, ubiquitous.

It is found in the nucleus. It localises to the cytoplasm. The protein localises to the cell membrane. Functionally, binds to ssRNA containing the consensus sequence 5'-AGGUAA-3'. Might normally function as a transcriptional repressor. EWS-fusion-proteins (EFPS) may play a role in the tumorigenic process. They may disturb gene expression by mimicking, or interfering with the normal function of CTD-POLII within the transcription initiation complex. They may also contribute to an aberrant activation of the fusion protein target genes. The sequence is that of RNA-binding protein EWS (EWSR1) from Homo sapiens (Human).